Consider the following 251-residue polypeptide: Putative cysteine-rich repeat secretory protein 36 (251 aa).

An N-terminal signal peptide occupies residues 1–28 (MHSSYSLSKCLVCFTILAIQTLIRRVSS). Gnk2-homologous domains follow at residues 35–139 (YLNH…NSPP) and 144–248 (YENT…LYPF).

Belongs to the cysteine-rich repeat secretory protein family.

The protein localises to the secreted. The chain is Putative cysteine-rich repeat secretory protein 36 (CRRSP36) from Arabidopsis thaliana (Mouse-ear cress).